The primary structure comprises 589 residues: Carbonic anhydrase (589 aa).

2 consecutive Alpha-carbonic anhydrase domains span residues 59-316 and 321-585; these read HDYN…YEYK and DKYN…YGYN. A substrate-binding site is contributed by 258 to 259; it reads TT. A catalytic region spans residues 390-589; that stretch reads MQINFGDPPA…TVYGYNGAAA (200 aa). 3 residues coordinate Zn(2+): H420, H422, and H440.

It belongs to the alpha-carbonic anhydrase family. Zn(2+) serves as cofactor.

It carries out the reaction hydrogencarbonate + H(+) = CO2 + H2O. Its function is as follows. Reversible hydration of carbon dioxide. The sequence is that of Carbonic anhydrase (DCA) from Dunaliella salina (Green alga).